The following is a 97-amino-acid chain: Small ribosomal subunit protein bS6 (97 aa).

It belongs to the bacterial ribosomal protein bS6 family.

In terms of biological role, binds together with bS18 to 16S ribosomal RNA. The chain is Small ribosomal subunit protein bS6 from Dictyoglomus turgidum (strain DSM 6724 / Z-1310).